The following is a 466-amino-acid chain: Probable ribonuclease FAU-1 (466 aa).

The region spanning Gly90–Thr152 is the S1 motif domain.

The protein belongs to the FAU-1 family.

Functionally, probable RNase involved in rRNA stability through maturation and/or degradation of precursor rRNAs. Binds to RNA in loop regions with AU-rich sequences. The polypeptide is Probable ribonuclease FAU-1 (Haloarcula marismortui (strain ATCC 43049 / DSM 3752 / JCM 8966 / VKM B-1809) (Halobacterium marismortui)).